Consider the following 353-residue polypeptide: N-methyltransferase (353 aa).

Residues Ser-171, Ala-195, Asp-218, Asp-238, and Lys-252 each contribute to the S-adenosyl-L-homocysteine site. Asp-218 contributes to the S-adenosyl-L-methionine binding site.

This sequence belongs to the class I-like SAM-binding methyltransferase superfamily. Cation-independent O-methyltransferase family. As to quaternary structure, homodimer. As to expression, expressed at high levels in all tissues.

The catalysed reaction is 3-methoxytyramine + S-adenosyl-L-methionine = N-methyl-3-methoxytyramine + S-adenosyl-L-homocysteine + H(+). It carries out the reaction mescaline + S-adenosyl-L-methionine = N-methylmescaline + S-adenosyl-L-homocysteine + H(+). It catalyses the reaction tyramine + S-adenosyl-L-methionine = N-methyltyramine + S-adenosyl-L-homocysteine + H(+). The enzyme catalyses 4-hydroxy-3,5-dimethoxyphenethylamine + S-adenosyl-L-methionine = N-methyl-4-hydroxy-3,5-dimethoxyphenethylamine + S-adenosyl-L-homocysteine + H(+). Its pathway is aromatic compound metabolism. It functions in the pathway alkaloid biosynthesis. Its function is as follows. N-methyltransferase participating in the biosynthesis of natural products derived from phenylethylamine, including mescaline, a natural hallucinogen potentially used in psychotherapeutic treatments. Catalyzes the N-methylation of many substrates, including 3-methoxytyramine, 5-hydroxy-3,4-dimethoxyphenethylamine, 4-hydroxy-3,5-dimethoxyphenethylamine, tyramine and mescaline. In Lophophora williamsii (Peyote), this protein is N-methyltransferase.